A 259-amino-acid chain; its full sequence is Leucine-rich repeat-containing protein 3B (259 aa).

An N-terminal signal peptide occupies residues 1-33; that stretch reads MNLVDLWLTRSLSMCLLLQSFVLMILCFHSASM. The LRRNT domain occupies 34–64; that stretch reads CPKGCLCSSSGGLNVTCSNANLKEIPRDLPP. Asn47 carries an N-linked (GlcNAc...) asparagine glycan. LRR repeat units follow at residues 65 to 86, 89 to 110, and 114 to 135; these read ETVL…IFKD, QLRV…AFKG, and TLQT…AFNN. N-linked (GlcNAc...) asparagine glycosylation is present at Asn94. The 53-residue stretch at 145 to 197 folds into the LRRCT domain; the sequence is NPWHCDCTLQQVLRSMVSNHETAHNVICKTSVLDEHAGRPFLNAANDADLCNL. Residues 205-225 traverse the membrane as a helical segment; sequence AMLVTMFGWFTMVISYVVYYV.

Belongs to the LRRC3 family.

Its subcellular location is the membrane. The chain is Leucine-rich repeat-containing protein 3B (LRRC3B) from Bos taurus (Bovine).